A 517-amino-acid polypeptide reads, in one-letter code: MYEQVVEYWYVVLPLVFILHKVFDMWHTRRLMKQLGAAPVTNQLHDNFFGIINGWKHLSSRKKVELKNIMIINLPIRKFQVWVHMLVPSLEQSSSSQKIRRNIKALLATQFSDFSLGKRHTLFKPLLGDGIFTLDGQGWKHSRAMLRPQFAREQVAHVTSLEPHFQLLKKHMVKNKGGFFDIQELFFRFTVDSATEFLFGESVHSLKDETIGSYQDDIDFVGRKDFAESFNKAQEYLAIRTLVQDFYYLVNNQEFRDCNKLVHKFTNYYVQRALDATPEELEKQSGYVFLYELVKQTRGPNVLRDQSLNILLAGRDTSAGLLSFAVFELARNPHIWAKLREDVESQFGLGEQSRIEEITFESLKRCGYLKAFLNETLRVYPSVPRNFRIATKNTTLPRGGGSDGNSPVLVKKGEAVSYGINSTHLDPVYYGDDAAEFRPERWNEPSTRKLGWAYLPFNGGPRICLGQQFALTEAGYVLVRLAQSFDTLELKPPVVYPPKRLTNLTMSLQDGTIVKID.

Cysteine 464 provides a ligand contact to heme.

The protein belongs to the cytochrome P450 family. The cofactor is heme.

In terms of biological role, together with an NADPH cytochrome P450 the enzyme system catalyzes the terminal hydroxylation as the first step in the assimilation of alkanes and fatty acids. Preferentially hydroxylates lauric acid. The chain is Cytochrome P450 52A8 (CYP52A8) from Candida tropicalis (Yeast).